A 949-amino-acid chain; its full sequence is Protein translocase subunit SecA (949 aa).

Residues Gln-87, 105-109 (GEGKT), and Asp-524 contribute to the ATP site. 2 disordered regions span residues 852–876 (PPPGENGFSGGMQEISGPQGGSSGG) and 896–939 (LEFS…GSGK). Zn(2+) contacts are provided by Cys-933, Cys-935, Cys-944, and His-945.

Belongs to the SecA family. In terms of assembly, monomer and homodimer. Part of the essential Sec protein translocation apparatus which comprises SecA, SecYEG and auxiliary proteins SecDF-YajC and YidC. It depends on Zn(2+) as a cofactor.

It localises to the cell inner membrane. The protein localises to the cytoplasm. The enzyme catalyses ATP + H2O + cellular proteinSide 1 = ADP + phosphate + cellular proteinSide 2.. Functionally, part of the Sec protein translocase complex. Interacts with the SecYEG preprotein conducting channel. Has a central role in coupling the hydrolysis of ATP to the transfer of proteins into and across the cell membrane, serving both as a receptor for the preprotein-SecB complex and as an ATP-driven molecular motor driving the stepwise translocation of polypeptide chains across the membrane. This is Protein translocase subunit SecA from Methylocella silvestris (strain DSM 15510 / CIP 108128 / LMG 27833 / NCIMB 13906 / BL2).